The sequence spans 435 residues: Enolase (435 aa).

Substrate contacts are provided by histidine 155 and glutamate 164. Glutamate 205 serves as the catalytic Proton donor. Mg(2+) is bound by residues aspartate 243, glutamate 292, and aspartate 319. Residues glutamate 292, aspartate 319, lysine 344, 371–374 (SHRS), and lysine 395 contribute to the substrate site. Residue lysine 344 is the Proton acceptor of the active site.

It belongs to the enolase family. In terms of assembly, homooctamer. Requires Mg(2+) as cofactor.

It is found in the cytoplasm. The protein resides in the secreted. The protein localises to the cell surface. It catalyses the reaction (2R)-2-phosphoglycerate = phosphoenolpyruvate + H2O. The protein operates within carbohydrate degradation; glycolysis; pyruvate from D-glyceraldehyde 3-phosphate: step 4/5. Catalyzes the reversible conversion of 2-phosphoglycerate (2-PG) into phosphoenolpyruvate (PEP). It is essential for the degradation of carbohydrates via glycolysis. Its function is as follows. 'Moonlights' as a plasminogen receptor and plasmin activator. Binds host (human) plasminogen in vitro; enhances the activity of host tissue-specific plasminogen activator (tPA). The polypeptide is Enolase (Streptococcus pyogenes serotype M1).